Consider the following 406-residue polypeptide: COP9 signalosome complex subunit 4 (406 aa).

Ala-2 bears the N-acetylalanine mark. The residue at position 25 (Lys-25) is an N6-acetyllysine. Residues 197 to 366 enclose the PCI domain; the sequence is YRRKFIEAAQ…GIVHFETREA (170 aa).

It belongs to the CSN4 family. In terms of assembly, component of the CSN complex, composed of COPS1/GPS1, COPS2, COPS3, COPS4, COPS5, COPS6, COPS7 (COPS7A or COPS7B), COPS8 and COPS9. In the complex, it probably interacts directly with COPS1, COPS2, COPS3, COPS5, COPS6, COPS7 (COPS7A or COPS7B) and COPS8. Interacts with TOR1A; the interaction is direct and associates TOR1A and SNAPIN with the CSN complex. Interacts with STON2; controls STON2 neddylation levels. Interacts with ERCC6.

It localises to the cytoplasm. Its subcellular location is the nucleus. It is found in the cytoplasmic vesicle. The protein localises to the secretory vesicle. The protein resides in the synaptic vesicle. Functionally, component of the COP9 signalosome complex (CSN), a complex involved in various cellular and developmental processes. The CSN complex is an essential regulator of the ubiquitin (Ubl) conjugation pathway by mediating the deneddylation of the cullin subunits of SCF-type E3 ligase complexes, leading to decrease the Ubl ligase activity of SCF-type complexes such as SCF, CSA or DDB2. Also involved in the deneddylation of non-cullin subunits such as STON2. The complex is also involved in phosphorylation of p53/TP53, c-jun/JUN, IkappaBalpha/NFKBIA, ITPK1, IRF8/ICSBP and SNAPIN, possibly via its association with CK2 and PKD kinases. CSN-dependent phosphorylation of TP53 and JUN promotes and protects degradation by the Ubl system, respectively. The chain is COP9 signalosome complex subunit 4 (COPS4) from Bos taurus (Bovine).